Consider the following 72-residue polypeptide: UPF0270 protein YheU (72 aa).

The protein belongs to the UPF0270 family.

The polypeptide is UPF0270 protein YheU (Escherichia fergusonii (strain ATCC 35469 / DSM 13698 / CCUG 18766 / IAM 14443 / JCM 21226 / LMG 7866 / NBRC 102419 / NCTC 12128 / CDC 0568-73)).